Here is a 361-residue protein sequence, read N- to C-terminus: Phospho-N-acetylmuramoyl-pentapeptide-transferase (361 aa).

10 helical membrane passes run 28–48 (LAII…IEFL), 74–94 (TMGG…LADL), 99–119 (IWIT…DDYA), 133–153 (SKLL…EYLD), 168–188 (LSLD…VGSS), 203–223 (VPIA…GNLI), 236–256 (TGEL…FLWF), 263–283 (VFMG…ISVI), 288–308 (IVLA…ILQV), and 338–358 (KVVI…LSSL).

It belongs to the glycosyltransferase 4 family. MraY subfamily. Requires Mg(2+) as cofactor.

It is found in the cell membrane. It carries out the reaction UDP-N-acetyl-alpha-D-muramoyl-L-alanyl-gamma-D-glutamyl-meso-2,6-diaminopimeloyl-D-alanyl-D-alanine + di-trans,octa-cis-undecaprenyl phosphate = di-trans,octa-cis-undecaprenyl diphospho-N-acetyl-alpha-D-muramoyl-L-alanyl-D-glutamyl-meso-2,6-diaminopimeloyl-D-alanyl-D-alanine + UMP. It functions in the pathway cell wall biogenesis; peptidoglycan biosynthesis. Its function is as follows. Catalyzes the initial step of the lipid cycle reactions in the biosynthesis of the cell wall peptidoglycan: transfers peptidoglycan precursor phospho-MurNAc-pentapeptide from UDP-MurNAc-pentapeptide onto the lipid carrier undecaprenyl phosphate, yielding undecaprenyl-pyrophosphoryl-MurNAc-pentapeptide, known as lipid I. The polypeptide is Phospho-N-acetylmuramoyl-pentapeptide-transferase (Rickettsia rickettsii).